Here is a 434-residue protein sequence, read N- to C-terminus: Histidinol dehydrogenase (434 aa).

NAD(+) is bound by residues Tyr-130, Gln-191, and Asn-214. Substrate contacts are provided by Ser-237, Gln-259, and His-262. The Zn(2+) site is built by Gln-259 and His-262. Catalysis depends on proton acceptor residues Glu-328 and His-329. Substrate contacts are provided by His-329, Asp-362, Glu-416, and His-421. Asp-362 lines the Zn(2+) pocket. His-421 serves as a coordination point for Zn(2+).

Belongs to the histidinol dehydrogenase family. Requires Zn(2+) as cofactor.

It carries out the reaction L-histidinol + 2 NAD(+) + H2O = L-histidine + 2 NADH + 3 H(+). It functions in the pathway amino-acid biosynthesis; L-histidine biosynthesis; L-histidine from 5-phospho-alpha-D-ribose 1-diphosphate: step 9/9. Functionally, catalyzes the sequential NAD-dependent oxidations of L-histidinol to L-histidinaldehyde and then to L-histidine. This chain is Histidinol dehydrogenase, found in Rhodospirillum rubrum (strain ATCC 11170 / ATH 1.1.1 / DSM 467 / LMG 4362 / NCIMB 8255 / S1).